The primary structure comprises 308 residues: Homoserine kinase (308 aa).

95–105 (PQSRGLGSSAA) contributes to the ATP binding site.

It belongs to the GHMP kinase family. Homoserine kinase subfamily.

It localises to the cytoplasm. The catalysed reaction is L-homoserine + ATP = O-phospho-L-homoserine + ADP + H(+). It functions in the pathway amino-acid biosynthesis; L-threonine biosynthesis; L-threonine from L-aspartate: step 4/5. Its function is as follows. Catalyzes the ATP-dependent phosphorylation of L-homoserine to L-homoserine phosphate. The sequence is that of Homoserine kinase from Corynebacterium diphtheriae (strain ATCC 700971 / NCTC 13129 / Biotype gravis).